Here is a 490-residue protein sequence, read N- to C-terminus: Lignostilbene-alpha,beta-dioxygenase isozyme III (490 aa).

Residues H167, H218, H285, and H477 each contribute to the Fe cation site.

The protein belongs to the carotenoid oxygenase family. Homodimer of two beta subunits. Requires Fe(2+) as cofactor.

The catalysed reaction is 1,2-bis(4-hydroxy-3-methoxyphenyl)ethylene + O2 = 2 vanillin. Its activity is regulated as follows. Activity is high with beta-5 type stilbene and minimal with beta-1 type stilbene. A 4-hydroxyl group and trans-stilbene structure is essential for the binding of substrates to the enzyme. Catalyzes the cleavage of the interphenyl double bond (C alpha-C beta) of lignin-derived polyphenolic diaryl-propane type compounds (Stilbene). The protein is Lignostilbene-alpha,beta-dioxygenase isozyme III of Sphingomonas paucimobilis (Pseudomonas paucimobilis).